Consider the following 389-residue polypeptide: Succinate--CoA ligase [ADP-forming] subunit beta (389 aa).

The ATP-grasp domain maps to 9–244 (KAVLAKYGVP…LTEEDPAEVE (236 aa)). ATP is bound by residues Lys46, 53-55 (GRG), Glu99, Ser102, and Glu107. Residues Asn199 and Asp213 each coordinate Mg(2+). Residues Asn264 and 321–323 (GIM) each bind substrate.

It belongs to the succinate/malate CoA ligase beta subunit family. In terms of assembly, heterotetramer of two alpha and two beta subunits. The cofactor is Mg(2+).

The enzyme catalyses succinate + ATP + CoA = succinyl-CoA + ADP + phosphate. It catalyses the reaction GTP + succinate + CoA = succinyl-CoA + GDP + phosphate. The protein operates within carbohydrate metabolism; tricarboxylic acid cycle; succinate from succinyl-CoA (ligase route): step 1/1. In terms of biological role, succinyl-CoA synthetase functions in the citric acid cycle (TCA), coupling the hydrolysis of succinyl-CoA to the synthesis of either ATP or GTP and thus represents the only step of substrate-level phosphorylation in the TCA. The beta subunit provides nucleotide specificity of the enzyme and binds the substrate succinate, while the binding sites for coenzyme A and phosphate are found in the alpha subunit. This Parvibaculum lavamentivorans (strain DS-1 / DSM 13023 / NCIMB 13966) protein is Succinate--CoA ligase [ADP-forming] subunit beta.